Reading from the N-terminus, the 111-residue chain is uncharacterized protein (111 aa).

It belongs to the asfivirus E111R family.

This is an uncharacterized protein from African swine fever virus (isolate Pig/Kenya/KEN-50/1950) (ASFV).